The following is a 372-amino-acid chain: Glutamate 5-kinase (372 aa).

ATP is bound at residue lysine 14. Substrate is bound by residues serine 54, aspartate 141, and asparagine 153. ATP is bound by residues 173-174 (TD) and 215-221 (TGGMITK). One can recognise a PUA domain in the interval 280–358 (AGRLLLDDGA…REIEAALGYI (79 aa)).

It belongs to the glutamate 5-kinase family.

It localises to the cytoplasm. The enzyme catalyses L-glutamate + ATP = L-glutamyl 5-phosphate + ADP. It participates in amino-acid biosynthesis; L-proline biosynthesis; L-glutamate 5-semialdehyde from L-glutamate: step 1/2. Catalyzes the transfer of a phosphate group to glutamate to form L-glutamate 5-phosphate. This is Glutamate 5-kinase from Chromobacterium violaceum (strain ATCC 12472 / DSM 30191 / JCM 1249 / CCUG 213 / NBRC 12614 / NCIMB 9131 / NCTC 9757 / MK).